A 310-amino-acid polypeptide reads, in one-letter code: Vomeronasal type-1 receptor 101 (310 aa).

Topologically, residues 1–19 (MNKVNILPSDTNMKITLFS) are extracellular. A helical membrane pass occupies residues 20-40 (ELSVGISANSILFFAHLCMFF). Residues 41-49 (EENRSKPID) are Cytoplasmic-facing. The helical transmembrane segment at 50-70 (LCIAFLSLTQLMLLVTMGLIA) threads the bilayer. The Extracellular segment spans residues 71–93 (ADMFMAQGIWDITTCRSLIYFHR). Cysteines 85 and 172 form a disulfide. A helical transmembrane segment spans residues 94–114 (LLRGFNLCAACLLHILWTFTL). Topologically, residues 115–134 (SPRSSCLTKFKHKSPHHISG) are cytoplasmic. A helical transmembrane segment spans residues 135–155 (AYLFFCVLYMSFSSHLFVLVI). The Extracellular portion of the chain corresponds to 156–193 (ATSNLTSDHFMYVTQSCSLLPMSYSRTSTFSLLMVTRE). Residue N159 is glycosylated (N-linked (GlcNAc...) asparagine). A helical transmembrane segment spans residues 194–214 (VFLISLMALSSGYMVTLLWRH). The Cytoplasmic segment spans residues 215–238 (KKQAQHLHSTRLSSKASPQQRATR). A helical membrane pass occupies residues 239–259 (TILLLMTFFVVFYILGTVIFH). Topologically, residues 260–268 (SRTKFKDGS) are extracellular. The chain crosses the membrane as a helical span at residues 269-289 (IFYCVQIIVSHSYATISPFVF). Residues 290 to 310 (VFSEKRIIKFFRSMCGRIVNT) lie on the Cytoplasmic side of the membrane.

This sequence belongs to the G-protein coupled receptor 1 family. Expressed in 1-4% of neurons of the vomeronasal organ. Only one pheromone receptor gene may be expressed in a particular neuron. Not expressed in the main olfactory epithelium.

Its subcellular location is the cell membrane. Its function is as follows. Putative pheromone receptor implicated in the regulation of social as well as reproductive behavior. This Rattus norvegicus (Rat) protein is Vomeronasal type-1 receptor 101 (Vom1r101).